Consider the following 383-residue polypeptide: Heterogeneous nuclear rnp K-like protein 2 (383 aa).

KH domains follow at residues Asn58 to Val122, Ile161 to Ile226, and Gln256 to Leu321. The tract at residues Arg332 to Glu383 is disordered. A compositionally biased stretch (low complexity) spans Ser343 to Ala362. The segment covering Asn363 to Glu376 has biased composition (polar residues).

The protein belongs to the HEK2 family. Binds RNA.

The protein localises to the cytoplasm. Its subcellular location is the P-body. It localises to the nucleus. The protein resides in the chromosome. It is found in the telomere. Functionally, RNA-binding protein involved in the correct localization of transcripts in the cell. RNA localization is a widespread mechanism for achieving localized protein synthesis. Involved in structural and functional organization of telomeric chromatin and regulates silencing at the HMR locus. The protein is Heterogeneous nuclear rnp K-like protein 2 (HEK2) of Kluyveromyces lactis (strain ATCC 8585 / CBS 2359 / DSM 70799 / NBRC 1267 / NRRL Y-1140 / WM37) (Yeast).